We begin with the raw amino-acid sequence, 437 residues long: Transcription factor E2F2 (437 aa).

The interval 65–105 (ATPHGPEGQVVRCLPAGRLPAKRKLDLEGIGRPVVPEFPTP) is cyclin A/CDK2 binding. The DNA-binding element occupies 107–196 (GKCIRVDGLP…KNNIQWVGRG (90 aa)). The interval 155 to 176 (LNWAAEVLDVQKRRIYDITNVL) is leucine-zipper. The short motif at 160-196 (EVLDVQKRRIYDITNVLEGIQLIRKKAKNNIQWVGRG) is the DEF box element. A dimerization region spans residues 197–289 (MFEDPTRPGK…PDRTEDNLQI (93 aa)). A disordered region spans residues 307-368 (VQEPDSPSEE…APPPPSLVPL (62 aa)). Over residues 315–330 (EEPLPSTSTLCPSPDS) the composition is skewed to low complexity. Pro residues predominate over residues 351–365 (APAPTPQQAPPPPSL). Residues 359–437 (APPPPSLVPL…SYDLGDLLIN (79 aa)) are transactivation. The retinoblastoma protein binding stretch occupies residues 410–427 (DDYLWGLEAGEGISDLFD).

This sequence belongs to the E2F/DP family. Component of the DRTF1/E2F transcription factor complex. Forms heterodimers with DP family members. The E2F2 complex binds specifically hypophosphorylated retinoblastoma protein RB1. During the cell cycle, RB1 becomes phosphorylated in mid-to-late G1 phase, detaches from the DRTF1/E2F complex, rendering E2F transcriptionally active. Viral oncoproteins, notably E1A, T-antigen and HPV E7, are capable of sequestering RB1, thus releasing the active complex. Binds EAPP. Post-translationally, phosphorylated by CDK2 and cyclin A-CDK2 in the S-phase. Highest level of expression is found in placenta, low levels are found in lung. Found as well in many immortalized cell lines derived from tumor samples.

It localises to the nucleus. In terms of biological role, transcription activator that binds DNA cooperatively with DP proteins through the E2 recognition site, 5'-TTTC[CG]CGC-3' found in the promoter region of a number of genes whose products are involved in cell cycle regulation or in DNA replication. The DRTF1/E2F complex functions in the control of cell-cycle progression from g1 to s phase. E2F2 binds specifically to RB1 in a cell-cycle dependent manner. The polypeptide is Transcription factor E2F2 (E2F2) (Homo sapiens (Human)).